The chain runs to 491 residues: UDP-N-acetylmuramate--L-alanine ligase (491 aa).

ATP is bound at residue 126–132 (GTHGKTT).

This sequence belongs to the MurCDEF family.

It is found in the cytoplasm. The enzyme catalyses UDP-N-acetyl-alpha-D-muramate + L-alanine + ATP = UDP-N-acetyl-alpha-D-muramoyl-L-alanine + ADP + phosphate + H(+). It participates in cell wall biogenesis; peptidoglycan biosynthesis. Cell wall formation. This is UDP-N-acetylmuramate--L-alanine ligase from Salmonella choleraesuis (strain SC-B67).